Here is an 888-residue protein sequence, read N- to C-terminus: 3-hydroxy-3-methylglutaryl-coenzyme A reductase (888 aa).

At 1-9 the chain is on the cytoplasmic side; sequence MLSRLFRMH. The chain crosses the membrane as a helical span at residues 10 to 39; it reads GLFVASHPWEVIVGTVTLTICMMSMNMFTG. At 40–56 the chain is on the lumenal side; sequence NNKICGWNYECPKLEED. The chain crosses the membrane as a helical span at residues 57-78; the sequence is VLSSDIIILTITRCIAILYIYF. The region spanning 61–218 is the SSD domain; that stretch reads DIIILTITRC…MTFFPACVSL (158 aa). The short motif at 75–78 is the INSIG-binding motif element; the sequence is YIYF. Topologically, residues 79 to 89 are cytoplasmic; that stretch reads QFQNLRQLGSK. A Glycyl lysine isopeptide (Lys-Gly) (interchain with G-Cter in ubiquitin) cross-link involves residue Lys-89. A helical membrane pass occupies residues 90–114; it reads YILGIAGLFTIFSSFVFSTVVIHFL. The Lumenal segment spans residues 115 to 123; sequence DKELTGLNE. A helical transmembrane segment spans residues 124 to 149; sequence ALPFFLLLVDLSRASALAKFALSSNS. Topologically, residues 150-159 are cytoplasmic; it reads QDEVRENIAR. The chain crosses the membrane as a helical span at residues 160-187; it reads GMAILGPTFTLDALVECLVIGVGTMSGV. Over 188–191 the chain is Lumenal; it reads RQLE. The chain crosses the membrane as a helical span at residues 192–220; it reads IMCCFGCMSVLANYFVFMTFFPACVSLVL. The Cytoplasmic portion of the chain corresponds to 221-248; it reads ELSRESREGRPIWQLSHFARVLEEEENK. Lys-248 participates in a covalent cross-link: Glycyl lysine isopeptide (Lys-Gly) (interchain with G-Cter in ubiquitin). The chain crosses the membrane as a helical span at residues 249 to 275; sequence PNPVTQRVKMIMSLGLVLVHAHSRWIA. The Lumenal segment spans residues 276–314; the sequence is DPSPQNSTADNSKVSLGLDENVSKRIEPSVSLWQFYLSK. Asn-281 and Asn-296 each carry an N-linked (GlcNAc...) asparagine glycan. A helical transmembrane segment spans residues 315-339; it reads MISMDIEQVITLSLALLLAVKYIFF. The Cytoplasmic segment spans residues 340 to 888; sequence EQAETESTLS…LQGTCTKKAA (549 aa). Residues Glu-559, Lys-691, and Asp-767 each act as charge relay system in the active site. Residue His-866 is the Proton donor of the active site. At Ser-872 the chain carries Phosphoserine; by AMPK.

It belongs to the HMG-CoA reductase family. As to quaternary structure, homotetramer. Homodimer. Interacts (via its SSD) with INSIG1; the interaction, accelerated by sterols, leads to the recruitment of HMGCR to AMFR/gp78 for its ubiquitination by the sterol-mediated ERAD pathway. Interacts with UBIAD1. Undergoes sterol-mediated ubiquitination and ER-associated degradation (ERAD). Accumulation of sterols in the endoplasmic reticulum (ER) membrane, triggers binding of the reductase to the ER membrane protein INSIG1 or INSIG2. The INSIG1 binding leads to the recruitment of the ubiquitin ligase, AMFR/gp78, RNF139 or RNF145, initiating ubiquitination of the reductase. The ubiquitinated reductase is then extracted from the ER membrane and delivered to cytosolic 26S proteosomes by a mechanism probably mediated by the ATPase Valosin-containing protein VCP/p97. The INSIG2-binding leads to the recruitment of the ubiquitin ligase RNF139, initiating ubiquitination of the reductase. Lys-248 is the main site of ubiquitination. Ubiquitination is enhanced by the presence of a geranylgeranylated protein. Post-translationally, N-glycosylated. Deglycosylated by NGLY1 on release from the endoplasmic reticulum (ER) in a sterol-mediated manner. In terms of processing, phosphorylated. Phosphorylation at Ser-872 reduces the catalytic activity.

Its subcellular location is the endoplasmic reticulum membrane. The protein localises to the peroxisome membrane. The enzyme catalyses (R)-mevalonate + 2 NADP(+) + CoA = (3S)-3-hydroxy-3-methylglutaryl-CoA + 2 NADPH + 2 H(+). The protein operates within metabolic intermediate biosynthesis; (R)-mevalonate biosynthesis; (R)-mevalonate from acetyl-CoA: step 3/3. With respect to regulation, regulated by a negative feedback mechanism through sterols and non-sterol metabolites derived from mevalonate. Phosphorylation at Ser-872 down-regulates the catalytic activity. Its function is as follows. Catalyzes the conversion of (3S)-hydroxy-3-methylglutaryl-CoA (HMG-CoA) to mevalonic acid, the rate-limiting step in the synthesis of cholesterol and other isoprenoids, thus plays a critical role in cellular cholesterol homeostasis. This chain is 3-hydroxy-3-methylglutaryl-coenzyme A reductase (HMGCR), found in Bos taurus (Bovine).